Here is a 453-residue protein sequence, read N- to C-terminus: DDB1- and CUL4-associated factor 12 (453 aa).

The segment covering 1-12 (MARKAVSRKRKA) has biased composition (basic residues). Residues 1 to 34 (MARKAVSRKRKASASPGAGSDAQGPQFGWDHSLH) form a disordered region. The required for nuclear location and interaction with MOV10 stretch occupies residues 1–38 (MARKAVSRKRKASASPGAGSDAQGPQFGWDHSLHKRKR). S15 carries the phosphoserine modification. 4 WD repeats span residues 138–178 (QQGC…PVCV), 182–220 (GHKD…LTKS), 250–289 (PDNC…SKLL), and 338–375 (ERGS…FLEE).

This sequence belongs to the WD repeat DCAF12 family. As to quaternary structure, component of the DCX(DCAF12) E3 ubiquitin ligase complex, at least composed of CUL4 (CUL4A or CUL4B), DDB1, DCAF12 and RBX1.

The protein localises to the cytoplasm. It localises to the cytoskeleton. It is found in the microtubule organizing center. The protein resides in the centrosome. Its subcellular location is the nucleus. It participates in protein modification; protein ubiquitination. Its function is as follows. Substrate-recognition component of a DCX (DDB1-CUL4-X-box) E3 ubiquitin-protein ligase complex of the DesCEND (destruction via C-end degrons) pathway, which recognizes a C-degron located at the extreme C terminus of target proteins, leading to their ubiquitination and degradation. The C-degron recognized by the DesCEND pathway is usually a motif of less than ten residues and can be present in full-length proteins, truncated proteins or proteolytically cleaved forms. The DCX(DCAF12) complex specifically recognizes proteins with a diglutamate (Glu-Glu) at the C-terminus, such as MAGEA3, MAGEA6 and CCT5, leading to their ubiquitination and degradation. Ubiquitination of MAGEA3, MAGEA6 by DCX(DCAF12) complex is required for starvation-induced autophagy. Also directly recognizes the C-terminal glutamate-leucine (Glu-Leu) degron as an alternative degron in proteins such as MOV10, leading to their ubiquitination and degradation. Controls the protein level of MOV10 during spermatogenesis and in T cells, especially after their activation. In Mus musculus (Mouse), this protein is DDB1- and CUL4-associated factor 12.